We begin with the raw amino-acid sequence, 412 residues long: Putative competence-damage inducible protein (412 aa).

This sequence belongs to the CinA family.

This chain is Putative competence-damage inducible protein, found in Caldanaerobacter subterraneus subsp. tengcongensis (strain DSM 15242 / JCM 11007 / NBRC 100824 / MB4) (Thermoanaerobacter tengcongensis).